Here is a 586-residue protein sequence, read N- to C-terminus: Dolichyl-diphosphooligosaccharide--protein glycosyltransferase subunit 1 (586 aa).

A signal peptide spans 1–15; that stretch reads MRLLFAIALLGAVFA. Over 16-421 the chain is Lumenal; that stretch reads EDAWKAANVD…EFEFVDMLRE (406 aa). The chain crosses the membrane as a helical span at residues 422–442; sequence PLLASAFFFSLFFVIIVYSRF. At 443-586 the chain is on the cytoplasmic side; it reads DFTISSDPAK…NRADSVLASI (144 aa).

Belongs to the OST1 family. As to quaternary structure, component of the oligosaccharyltransferase (OST) complex.

The protein localises to the endoplasmic reticulum membrane. It is found in the cytoplasmic granule. Its pathway is protein modification; protein glycosylation. Functionally, subunit of the oligosaccharyl transferase (OST) complex that catalyzes the initial transfer of a defined glycan (Glc(3)Man(9)GlcNAc(2) in eukaryotes) from the lipid carrier dolichol-pyrophosphate to an asparagine residue within an Asn-X-Ser/Thr consensus motif in nascent polypeptide chains, the first step in protein N-glycosylation. N-glycosylation occurs cotranslationally and the complex associates with the Sec61 complex at the channel-forming translocon complex that mediates protein translocation across the endoplasmic reticulum (ER). All subunits are required for a maximal enzyme activity. The polypeptide is Dolichyl-diphosphooligosaccharide--protein glycosyltransferase subunit 1 (Caenorhabditis elegans).